Here is an 89-residue protein sequence, read N- to C-terminus: Small ribosomal subunit protein uS15 (89 aa).

Over residues 1–18 (MSLDTAEKQKLIENHQVH) the composition is skewed to basic and acidic residues. The disordered stretch occupies residues 1–23 (MSLDTAEKQKLIENHQVHPTDTG).

This sequence belongs to the universal ribosomal protein uS15 family. In terms of assembly, part of the 30S ribosomal subunit. Forms a bridge to the 50S subunit in the 70S ribosome, contacting the 23S rRNA.

In terms of biological role, one of the primary rRNA binding proteins, it binds directly to 16S rRNA where it helps nucleate assembly of the platform of the 30S subunit by binding and bridging several RNA helices of the 16S rRNA. Functionally, forms an intersubunit bridge (bridge B4) with the 23S rRNA of the 50S subunit in the ribosome. This is Small ribosomal subunit protein uS15 from Prochlorococcus marinus (strain MIT 9301).